The sequence spans 563 residues: BOS complex subunit NCLN (563 aa).

The first 42 residues, 1 to 42 (MLEEAGEVLENMLKASCLPLGFIVFLPAVLLLVAPPLPAADA), serve as a signal peptide directing secretion. Residues 43–522 (AHEFTVYRMQ…VMNAYRVKPA (480 aa)) lie on the Lumenal side of the membrane. 2 N-linked (GlcNAc...) asparagine glycosylation sites follow: Asn-241 and Asn-428. The helical transmembrane segment at 523–543 (VFDLLLAVGIAAYLGMAYVAV) threads the bilayer. Residues 544 to 563 (QHFSLLYKTVQRLLVKAKTQ) are Cytoplasmic-facing.

It belongs to the nicastrin family. As to quaternary structure, component of the back of Sec61 (BOS) complex, composed of NCLN/Nicalin, NOMO (NOMO1, NOMO2 or NOMO3) and TMEM147. The BOS complex is part of the multi-pass translocon (MPT) complex, composed of three subcomplexes, the GEL complex (composed of RAB5IF/OPTI and TMCO1), the BOS complex (composed of NCLN/Nicalin, NOMO and TMEM147) and the PAT complex (composed of WDR83OS/Asterix and CCDC47). The MPT complex associates with the SEC61 complex. In terms of tissue distribution, highly expressed in pancreas and skeletal muscle and, at lower levels, in heart.

The protein localises to the endoplasmic reticulum membrane. Functionally, component of the multi-pass translocon (MPT) complex that mediates insertion of multi-pass membrane proteins into the lipid bilayer of membranes. The MPT complex takes over after the SEC61 complex: following membrane insertion of the first few transmembrane segments of proteins by the SEC61 complex, the MPT complex occludes the lateral gate of the SEC61 complex to promote insertion of subsequent transmembrane regions. May antagonize Nodal signaling and subsequent organization of axial structures during mesodermal patterning, via its interaction with NOMO. This Homo sapiens (Human) protein is BOS complex subunit NCLN.